A 372-amino-acid chain; its full sequence is 4-hydroxy-3-methylbut-2-en-1-yl diphosphate synthase (flavodoxin) (372 aa).

[4Fe-4S] cluster-binding residues include Cys-270, Cys-273, Cys-305, and Glu-312.

It belongs to the IspG family. [4Fe-4S] cluster is required as a cofactor.

It catalyses the reaction (2E)-4-hydroxy-3-methylbut-2-enyl diphosphate + oxidized [flavodoxin] + H2O + 2 H(+) = 2-C-methyl-D-erythritol 2,4-cyclic diphosphate + reduced [flavodoxin]. The protein operates within isoprenoid biosynthesis; isopentenyl diphosphate biosynthesis via DXP pathway; isopentenyl diphosphate from 1-deoxy-D-xylulose 5-phosphate: step 5/6. Its function is as follows. Converts 2C-methyl-D-erythritol 2,4-cyclodiphosphate (ME-2,4cPP) into 1-hydroxy-2-methyl-2-(E)-butenyl 4-diphosphate. The chain is 4-hydroxy-3-methylbut-2-en-1-yl diphosphate synthase (flavodoxin) from Alcanivorax borkumensis (strain ATCC 700651 / DSM 11573 / NCIMB 13689 / SK2).